The primary structure comprises 123 residues: NADH-quinone oxidoreductase subunit A (123 aa).

3 consecutive transmembrane segments (helical) span residues 11 to 31 (YLPIAIFFGIAVLLSVLIMIL), 68 to 88 (LVAILFIIFDLEIAFLVPWAI), and 93 to 113 (IGKMGFFSMMFFLFVLIIGFI).

The protein belongs to the complex I subunit 3 family. In terms of assembly, NDH-1 is composed of 14 different subunits. Subunits NuoA, H, J, K, L, M, N constitute the membrane sector of the complex.

The protein localises to the cell inner membrane. The catalysed reaction is a quinone + NADH + 5 H(+)(in) = a quinol + NAD(+) + 4 H(+)(out). Its function is as follows. NDH-1 shuttles electrons from NADH, via FMN and iron-sulfur (Fe-S) centers, to quinones in the respiratory chain. The immediate electron acceptor for the enzyme in this species is believed to be ubiquinone. Couples the redox reaction to proton translocation (for every two electrons transferred, four hydrogen ions are translocated across the cytoplasmic membrane), and thus conserves the redox energy in a proton gradient. The chain is NADH-quinone oxidoreductase subunit A from Rickettsia prowazekii (strain Madrid E).